The primary structure comprises 276 residues: Putative pyridoxine kinase (276 aa).

N139 provides a ligand contact to ATP. Position 142 (E142) interacts with Mg(2+). Residues 176-180, D188, G213, and K238 each bind ATP; that span reads KGGKA.

The protein belongs to the ThiD family.

It catalyses the reaction pyridoxal + ATP = pyridoxal 5'-phosphate + ADP + H(+). In terms of biological role, phosphorylates B6 vitamers; functions in a salvage pathway. Uses pyridoxal, pyridoxine, and pyridoxamine as substrates. This chain is Putative pyridoxine kinase (pdxK), found in Staphylococcus aureus (strain COL).